Here is an 89-residue protein sequence, read N- to C-terminus: Acylphosphatase (89 aa).

The Acylphosphatase-like domain occupies 4–89; the sequence is SRRFLVSGTV…EQPPEGFRVL (86 aa). Catalysis depends on residues arginine 19 and asparagine 37.

It belongs to the acylphosphatase family.

The catalysed reaction is an acyl phosphate + H2O = a carboxylate + phosphate + H(+). The sequence is that of Acylphosphatase (acyP) from Alkalilimnicola ehrlichii (strain ATCC BAA-1101 / DSM 17681 / MLHE-1).